Reading from the N-terminus, the 188-residue chain is ADP-ribosylation factor K (188 aa).

GTP-binding positions include 34 to 40 (DGAGKST), 75 to 79 (DVGGQ), and 134 to 137 (NKQD).

It belongs to the small GTPase superfamily. Arf family.

The protein resides in the golgi apparatus. Functionally, GTP-binding protein that may be involved in protein trafficking. May modulate vesicle budding and uncoating within the Golgi apparatus. In Dictyostelium discoideum (Social amoeba), this protein is ADP-ribosylation factor K (arrK).